Here is a 489-residue protein sequence, read N- to C-terminus: N-succinylglutamate 5-semialdehyde dehydrogenase (489 aa).

223 to 228 (GSSNTG) is an NAD(+) binding site. Active-site residues include Glu-246 and Cys-280.

It belongs to the aldehyde dehydrogenase family. AstD subfamily.

The catalysed reaction is N-succinyl-L-glutamate 5-semialdehyde + NAD(+) + H2O = N-succinyl-L-glutamate + NADH + 2 H(+). Its pathway is amino-acid degradation; L-arginine degradation via AST pathway; L-glutamate and succinate from L-arginine: step 4/5. In terms of biological role, catalyzes the NAD-dependent reduction of succinylglutamate semialdehyde into succinylglutamate. The protein is N-succinylglutamate 5-semialdehyde dehydrogenase of Idiomarina loihiensis (strain ATCC BAA-735 / DSM 15497 / L2-TR).